An 825-amino-acid polypeptide reads, in one-letter code: Breast cancer anti-estrogen resistance protein 3 homolog (825 aa).

Residue Ala-2 is modified to N-acetylalanine. Positions 31–93 (KSPLTEHRPD…PVTQDSIQES (63 aa)) are disordered. Phosphoserine occurs at positions 32, 78, 83, 182, and 290. Residues 75 to 93 (HSKSPQQNSPVTQDSIQES) show a composition bias toward polar residues. The region spanning 154 to 253 (WYHGRIPRQV…QSGAIIFQPI (100 aa)) is the SH2 domain. An N6-methyllysine modification is found at Lys-334. Ser-358, Ser-363, and Ser-375 each carry phosphoserine. Arg-442 is modified (omega-N-methylarginine). At Ser-471 the chain carries Phosphoserine. Positions 548-818 (DPKVIAQHIL…TALSRKLEPP (271 aa)) constitute a Ras-GEF domain. The segment at 744-748 (LATAR) is mediates the interaction with BCAR1/p130CAS.

As to quaternary structure, part of a complex comprised of PTPRA, BCAR1, BCAR3 (via SH2 domain) and SRC; the formation of the complex is dependent on integrin mediated-tyrosine phosphorylation of PTPRA. Within the complex, interacts (via SH2 domain) with PTPRA (when phosphorylated on 'Tyr-798'). Interacts (via Ras-GEF domain) with BCAR1. Interacts (via Ras-GEF domain) with NEDD9. Interacts with PTK2/FAK1. Interacts with PTPN1. Interacts (via SH2 domain) with EGFR (when tyrosine-phosphorylated). Phosphorylated on tyrosine residues.

The protein localises to the cytoplasm. Its subcellular location is the cell junction. The protein resides in the focal adhesion. Acts as an adapter protein downstream of several growth factor receptors to promote cell proliferation, migration, and redistribution of actin fibers. Specifically involved in INS/insulin signaling pathway by mediating MAPK1/ERK2-MAPK3/ERK1 activation and DNA synthesis. Promotes insulin-mediated membrane ruffling. In response to vasoconstrictor peptide EDN1, involved in the activation of RAP1 downstream of PTK2B via interaction with phosphorylated BCAR1. Inhibits cell migration and invasion via regulation of TGFB-mediated matrix digestion, actin filament rearrangement, and inhibition of invadopodia activity. May inhibit TGFB-SMAD signaling, via facilitating BCAR1 and SMAD2 and/or SMAD3 interaction. Regulates EGF-induced DNA synthesis. Required for the maintenance of ocular lens morphology and structural integrity, potentially via regulation of focal adhesion complex signaling. Acts upstream of PTPRA to regulate the localization of BCAR1 and PTPRA to focal adhesions, via regulation of SRC-mediated phosphorylation of PTPRA. Positively regulates integrin-induced tyrosine phosphorylation of BCAR1. Acts as a guanine nucleotide exchange factor (GEF) for small GTPases RALA, RAP1A and RRAS. However, in a contrasting study, lacks GEF activity towards RAP1. The polypeptide is Breast cancer anti-estrogen resistance protein 3 homolog (BCAR3) (Macaca fascicularis (Crab-eating macaque)).